The sequence spans 300 residues: N-acetylmuramic acid 6-phosphate etherase (300 aa).

An SIS domain is found at 55–217 (IAERLRAGGR…STGAMIRLGK (163 aa)). Catalysis depends on Glu-83, which acts as the Proton donor. The active site involves Glu-114.

This sequence belongs to the GCKR-like family. MurNAc-6-P etherase subfamily. As to quaternary structure, homodimer.

It carries out the reaction N-acetyl-D-muramate 6-phosphate + H2O = N-acetyl-D-glucosamine 6-phosphate + (R)-lactate. Its pathway is amino-sugar metabolism; N-acetylmuramate degradation. Functionally, specifically catalyzes the cleavage of the D-lactyl ether substituent of MurNAc 6-phosphate, producing GlcNAc 6-phosphate and D-lactate. This is N-acetylmuramic acid 6-phosphate etherase from Symbiobacterium thermophilum (strain DSM 24528 / JCM 14929 / IAM 14863 / T).